A 155-amino-acid polypeptide reads, in one-letter code: Regulatory protein RecX (155 aa).

The protein belongs to the RecX family.

Its subcellular location is the cytoplasm. Functionally, modulates RecA activity. The polypeptide is Regulatory protein RecX (Pseudomonas fluorescens (strain SBW25)).